We begin with the raw amino-acid sequence, 299 residues long: Protease HtpX homolog (299 aa).

2 helical membrane passes run 14 to 34 and 39 to 59; these read ILVM…VGYL and ATGG…IMVG. Residue His-144 coordinates Zn(2+). The active site involves Glu-145. Residue His-148 coordinates Zn(2+). 2 helical membrane-spanning segments follow: residues 159 to 179 and 196 to 216; these read IALA…NFMW and VFAI…ATMV. Glu-225 is a binding site for Zn(2+).

The protein belongs to the peptidase M48B family. Zn(2+) is required as a cofactor.

Its subcellular location is the cell membrane. This chain is Protease HtpX homolog, found in Limosilactobacillus fermentum (strain NBRC 3956 / LMG 18251) (Lactobacillus fermentum).